A 488-amino-acid polypeptide reads, in one-letter code: UDP-N-acetylmuramate--L-alanine ligase (488 aa).

129–135 (GSHGKTT) serves as a coordination point for ATP.

Belongs to the MurCDEF family.

It localises to the cytoplasm. The catalysed reaction is UDP-N-acetyl-alpha-D-muramate + L-alanine + ATP = UDP-N-acetyl-alpha-D-muramoyl-L-alanine + ADP + phosphate + H(+). The protein operates within cell wall biogenesis; peptidoglycan biosynthesis. Functionally, cell wall formation. This Prochlorococcus marinus (strain MIT 9313) protein is UDP-N-acetylmuramate--L-alanine ligase.